The sequence spans 189 residues: Parkinson disease protein 7 (189 aa).

The residue at position 2 (Ala2) is an N-acetylalanine. 2 S-palmitoyl cysteine lipidation sites follow: Cys46 and Cys53. Residue Tyr67 is modified to Phosphotyrosine. Catalysis depends on Cys106, which acts as the Nucleophile. Position 106 is a cysteine sulfinic acid (-SO2H); alternate (Cys106). Cys106 is lipidated: S-palmitoyl cysteine; alternate. His126 is a catalytic residue. Residue Lys130 forms a Glycyl lysine isopeptide (Lys-Gly) (interchain with G-Cter in SUMO) linkage. Lys148 carries the post-translational modification N6-acetyllysine. An N6-succinyllysine modification is found at Lys182.

Belongs to the peptidase C56 family. Homodimer. Binds EFCAB6/DJBP and PIAS2. Part of a ternary complex containing PARK7, EFCAB6/DJBP and AR. Interacts (via N-terminus) with OTUD7B. Interacts with BBS1, HIPK1, CLCF1 and MTERF. Forms a complex with PINK1 and PRKN. Interacts (via C-terminus) with NCF1; the interaction is enhanced by LPS and modulates NCF1 phosphorylation and membrane translocation. Interacts with NENF. Deglycase activity does not require glutathione as a cofactor, however, glycated glutathione constitutes a PARK7 substrate. serves as cofactor. In terms of processing, sumoylated on Lys-130 by PIAS2 or PIAS4; which is enhanced after ultraviolet irradiation and essential for cell-growth promoting activity and transforming activity. Post-translationally, cys-106 is easily oxidized to sulfinic acid. Undergoes cleavage of a C-terminal peptide and subsequent activation of protease activity in response to oxidative stress. Highly expressed in pancreas, kidney, skeletal muscle, liver, testis and heart. Detected at slightly lower levels in placenta and brain (at protein level). Detected in astrocytes, Sertoli cells, spermatogonia, spermatids and spermatozoa. Expressed by pancreatic islets at higher levels than surrounding exocrine tissues.

It localises to the cell membrane. The protein localises to the cytoplasm. The protein resides in the nucleus. Its subcellular location is the membrane raft. It is found in the mitochondrion. It localises to the endoplasmic reticulum. It catalyses the reaction N(omega)-(1-hydroxy-2-oxopropyl)-L-arginyl-[protein] + H2O = lactate + L-arginyl-[protein] + H(+). The enzyme catalyses N(6)-(1-hydroxy-2-oxopropyl)-L-lysyl-[protein] + H2O = lactate + L-lysyl-[protein] + H(+). It carries out the reaction S-(1-hydroxy-2-oxopropyl)-L-cysteinyl-[protein] + H2O = lactate + L-cysteinyl-[protein] + H(+). The catalysed reaction is N(omega)-(1-hydroxy-2-oxoethyl)-L-arginyl-[protein] + H2O = L-arginyl-[protein] + glycolate + H(+). It catalyses the reaction N(6)-(1-hydroxy-2-oxoethyl)-L-lysyl-[protein] + H2O = glycolate + L-lysyl-[protein] + H(+). The enzyme catalyses S-(1-hydroxy-2-oxoethyl)-L-cysteinyl-[protein] + H2O = glycolate + L-cysteinyl-[protein] + H(+). It carries out the reaction N(2)-(1-hydroxy-2-oxopropyl)-dGTP + H2O = lactate + dGTP + H(+). The catalysed reaction is N(2)-(1-hydroxy-2-oxopropyl)-GTP + H2O = lactate + GTP + H(+). It catalyses the reaction N(2)-(1-hydroxy-2-oxopropyl)-GDP + H2O = lactate + GDP + H(+). The enzyme catalyses N(2)-(1-hydroxy-2-oxopropyl)-GMP + H2O = lactate + GMP + H(+). It carries out the reaction N(2)-(1-hydroxy-2-oxoethyl)-dGTP + H2O = dGTP + glycolate + H(+). The catalysed reaction is N(2)-(1-hydroxy-2-oxoethyl)-GTP + H2O = glycolate + GTP + H(+). It catalyses the reaction N(2)-(1-hydroxy-2-oxoethyl)-GDP + H2O = glycolate + GDP + H(+). The enzyme catalyses N(2)-(1-hydroxy-2-oxoethyl)-GMP + H2O = glycolate + GMP + H(+). It carries out the reaction an N(2)-(1-hydroxy-2-oxopropyl)-guanosine in RNA + H2O = a guanosine in RNA + lactate + H(+). The catalysed reaction is an N(2)-(1-hydroxy-2-oxopropyl)-2'-deoxyguanosine in DNA + H2O = a 2'-deoxyguanosine in DNA + lactate + H(+). It catalyses the reaction an N(2)-(1-hydroxy-2-oxoethyl)-guanosine in RNA + H2O = a guanosine in RNA + glycolate + H(+). The enzyme catalyses an N(2)-(1-hydroxy-2-oxoethyl)-2'-deoxyguanosine in DNA + H2O = a 2'-deoxyguanosine in DNA + glycolate + H(+). Functionally, multifunctional protein with controversial molecular function which plays an important role in cell protection against oxidative stress and cell death acting as oxidative stress sensor and redox-sensitive chaperone and protease. It is involved in neuroprotective mechanisms like the stabilization of NFE2L2 and PINK1 proteins, male fertility as a positive regulator of androgen signaling pathway as well as cell growth and transformation through, for instance, the modulation of NF-kappa-B signaling pathway. Has been described as a protein and nucleotide deglycase that catalyzes the deglycation of the Maillard adducts formed between amino groups of proteins or nucleotides and reactive carbonyl groups of glyoxals. But this function is rebuted by other works. As a protein deglycase, repairs methylglyoxal- and glyoxal-glycated proteins, and releases repaired proteins and lactate or glycolate, respectively. Deglycates cysteine, arginine and lysine residues in proteins, and thus reactivates these proteins by reversing glycation by glyoxals. Acts on early glycation intermediates (hemithioacetals and aminocarbinols), preventing the formation of advanced glycation endproducts (AGE) that cause irreversible damage. Also functions as a nucleotide deglycase able to repair glycated guanine in the free nucleotide pool (GTP, GDP, GMP, dGTP) and in DNA and RNA. Is thus involved in a major nucleotide repair system named guanine glycation repair (GG repair), dedicated to reversing methylglyoxal and glyoxal damage via nucleotide sanitization and direct nucleic acid repair. Protects histones from adduction by methylglyoxal, controls the levels of methylglyoxal-derived argininine modifications on chromatin. Able to remove the glycations and restore histone 3, histone glycation disrupts both local and global chromatin architecture by altering histone-DNA interactions as well as histone acetylation and ubiquitination levels. Displays a very low glyoxalase activity that may reflect its deglycase activity. Eliminates hydrogen peroxide and protects cells against hydrogen peroxide-induced cell death. Required for correct mitochondrial morphology and function as well as for autophagy of dysfunctional mitochondria. Plays a role in regulating expression or stability of the mitochondrial uncoupling proteins SLC25A14 and SLC25A27 in dopaminergic neurons of the substantia nigra pars compacta and attenuates the oxidative stress induced by calcium entry into the neurons via L-type channels during pacemaking. Regulates astrocyte inflammatory responses, may modulate lipid rafts-dependent endocytosis in astrocytes and neuronal cells. In pancreatic islets, involved in the maintenance of mitochondrial reactive oxygen species (ROS) levels and glucose homeostasis in an age- and diet dependent manner. Protects pancreatic beta cells from cell death induced by inflammatory and cytotoxic setting. Binds to a number of mRNAs containing multiple copies of GG or CC motifs and partially inhibits their translation but dissociates following oxidative stress. Metal-binding protein able to bind copper as well as toxic mercury ions, enhances the cell protection mechanism against induced metal toxicity. In macrophages, interacts with the NADPH oxidase subunit NCF1 to direct NADPH oxidase-dependent ROS production, and protects against sepsis. This is Parkinson disease protein 7 from Homo sapiens (Human).